Consider the following 223-residue polypeptide: Endonuclease NucS (223 aa).

Belongs to the NucS endonuclease family.

Its subcellular location is the cytoplasm. Its function is as follows. Cleaves both 3' and 5' ssDNA extremities of branched DNA structures. This Mycobacterium sp. (strain JLS) protein is Endonuclease NucS.